The following is a 312-amino-acid chain: Methionyl-tRNA formyltransferase (312 aa).

Residue 111–114 (SLLP) participates in (6S)-5,6,7,8-tetrahydrofolate binding.

This sequence belongs to the Fmt family.

It carries out the reaction L-methionyl-tRNA(fMet) + (6R)-10-formyltetrahydrofolate = N-formyl-L-methionyl-tRNA(fMet) + (6S)-5,6,7,8-tetrahydrofolate + H(+). Functionally, attaches a formyl group to the free amino group of methionyl-tRNA(fMet). The formyl group appears to play a dual role in the initiator identity of N-formylmethionyl-tRNA by promoting its recognition by IF2 and preventing the misappropriation of this tRNA by the elongation apparatus. The chain is Methionyl-tRNA formyltransferase from Myxococcus xanthus (strain DK1622).